Reading from the N-terminus, the 297-residue chain is Cell death peptidase (297 aa).

Transmembrane regions (helical) follow at residues 61–82 and 149–178; these read IVLT…WVFT and IFLC…AFST.

This sequence belongs to the peptidase U49 family.

It is found in the cell membrane. Functionally, interacts with a short DNA sequence about one-quarter of the way into the major capsid protein gene 23 of T4; general translation inhibition occurs when this late gene of the virus is expressed. This chain is Cell death peptidase (lit), found in Escherichia coli (strain K12).